The primary structure comprises 397 residues: Tryptophan synthase beta chain (397 aa).

An N6-(pyridoxal phosphate)lysine modification is found at Lys-87.

It belongs to the TrpB family. Tetramer of two alpha and two beta chains. It depends on pyridoxal 5'-phosphate as a cofactor.

It catalyses the reaction (1S,2R)-1-C-(indol-3-yl)glycerol 3-phosphate + L-serine = D-glyceraldehyde 3-phosphate + L-tryptophan + H2O. Its pathway is amino-acid biosynthesis; L-tryptophan biosynthesis; L-tryptophan from chorismate: step 5/5. Its function is as follows. The beta subunit is responsible for the synthesis of L-tryptophan from indole and L-serine. The chain is Tryptophan synthase beta chain from Escherichia coli O157:H7.